A 452-amino-acid polypeptide reads, in one-letter code: MARRRRRACIALFLVLLFAFGTLMGLRTLKAPDGLPALGPGPELAPFERRPEGNPAPARAPAAPAAPPPPPPRTAAPRASLGPAEADPAPRQSLRVYSDLHAFYYSWYGSPRREGHYIHWDHVMVPHWDPKISASYPRGRHSPPDDLGSSFYPELGPYSSRDPDVLREHMTQLKEAAIGVLVLSWYPPGMADDNGEPTDDLVPAILDTAHQYNIQVAFHIQPYKGRDDITVHDNIKYIIDTYGSHGAFYRYKNSMGKSLPLFYIYDSYLTSPEAWAHLLTQNGPHSIRNTPYDGVFIALLVEESHTHDILAAGFDGMYTYFASNGFSFGSSHQNWKAVKNFCDTNNLMFIPSVGPGYIDTSIRPWNNHNTRNRVNGKYYETALQAALTVRPEIVSITSFNEWHEGTQIEKAVPKTTPTRLYLDYLPHQSSLYLELTRRWAEHFIKEKEQWLM.

The Cytoplasmic segment spans residues 1–8 (MARRRRRA). A helical; Signal-anchor for type II membrane protein transmembrane segment spans residues 9–29 (CIALFLVLLFAFGTLMGLRTL). Over 30–452 (KAPDGLPALG…FIKEKEQWLM (423 aa)) the chain is Lumenal. Residues 40-90 (PGPELAPFERRPEGNPAPARAPAAPAAPPPPPPRTAAPRASLGPAEADPAP) are disordered. The span at 64-74 (PAAPPPPPPRT) shows a compositional bias: pro residues.

It belongs to the glycosyl hydrolase 99 family.

Its subcellular location is the golgi apparatus membrane. This Mus musculus (Mouse) protein is Glycoprotein endo-alpha-1,2-mannosidase-like protein (Maneal).